An 88-amino-acid chain; its full sequence is Small ribosomal subunit protein uS17 (88 aa).

The protein belongs to the universal ribosomal protein uS17 family. Part of the 30S ribosomal subunit.

Its function is as follows. One of the primary rRNA binding proteins, it binds specifically to the 5'-end of 16S ribosomal RNA. This is Small ribosomal subunit protein uS17 from Yersinia pseudotuberculosis serotype O:1b (strain IP 31758).